The primary structure comprises 320 residues: Ferrochelatase (320 aa).

Fe cation contacts are provided by His194 and Glu275.

The protein belongs to the ferrochelatase family. In terms of assembly, monomer.

Its subcellular location is the cytoplasm. The catalysed reaction is heme b + 2 H(+) = protoporphyrin IX + Fe(2+). The protein operates within porphyrin-containing compound metabolism; protoheme biosynthesis; protoheme from protoporphyrin-IX: step 1/1. Its function is as follows. Catalyzes the ferrous insertion into protoporphyrin IX. The protein is Ferrochelatase of Salmonella typhi.